The chain runs to 158 residues: Mitotic-spindle organizing protein 2 (158 aa).

Residue Ser34 is modified to Phosphoserine. Positions 81 to 158 are disordered; that stretch reads AGQRVASDSQ…PGRSPPRSGT (78 aa). The segment covering 110–119 has biased composition (gly residues); sequence KGGGALGGGP. The residue at position 152 (Ser152) is a Phosphoserine.

Belongs to the MOZART2 family. In terms of assembly, associates with the gamma-tubulin ring complex (gTuRC) consisting of TUBGCP2, TUBGCP3, TUBGCP4, TUBGCP5 and TUBGCP6 and gamma-tubulin TUBG1 or TUBG2; within the complex, interacts with TUBGCP2; the interaction plays a role in gTuRC activation.

The protein resides in the cytoplasm. It localises to the cytoskeleton. It is found in the microtubule organizing center. Its subcellular location is the centrosome. The protein localises to the spindle. In terms of biological role, required for the recruitment and the assembly of the gamma-tubulin ring complex (gTuRC) at the centrosome. The gTuRC regulates the minus-end nucleation of alpha-beta tubulin heterodimers that grow into microtubule protafilaments, a critical step in centrosome duplication and spindle formation. This chain is Mitotic-spindle organizing protein 2 (MZT2), found in Bos taurus (Bovine).